The following is a 356-amino-acid chain: Protein ATP1B4 (356 aa).

Topologically, residues Met1–Ser109 are nuclear. Residues Glu26–Gly78 form a disordered region. 2 stretches are compositionally biased toward acidic residues: residues Ala33–Ala43 and Leu51–Gly72. The chain crosses the membrane as a helical; Signal-anchor for type II membrane protein span at residues Leu110 to Ile130. Over Tyr131–Thr356 the chain is Perinuclear space.

This sequence belongs to the X(+)/potassium ATPases subunit beta family. As to quaternary structure, associates with a SMAD7-transcriptional complex. Interacts with TOR1AIP1. Does not associate with known Na,K-ATPase alpha-subunits. Interacts with SNW1. In terms of tissue distribution, expressed in skeletal muscle (at protein level). Expressed during postnatal development in skeletal muscle and heart.

It localises to the nucleus inner membrane. In terms of biological role, may act as a transcriptional coregulator during muscle development through its interaction with SNW1. Has lost its ancestral function as a Na,K-ATPase beta-subunit. The sequence is that of Protein ATP1B4 (Atp1b4) from Mus musculus (Mouse).